The primary structure comprises 92 residues: Defensin Lucifensin (92 aa).

Positions 1-23 (MKFFMVFAVTFCLALSFVSQSLA) are cleaved as a signal peptide. Positions 24–52 (LPADDEAHFVDGLEALKTIEPELHGRYKR) are excised as a propeptide. Intrachain disulfides connect Cys-55–Cys-82, Cys-68–Cys-88, and Cys-72–Cys-90.

Belongs to the invertebrate defensin family. Type 1 subfamily. The disulfide bonds are essential for antimicrobial activity. Larval fat body, hemolymph and salivary glands (at protein level). Expressed in the salivary glands of all larval stages.

It localises to the secreted. Its subcellular location is the host cell membrane. In terms of biological role, shows strong antibacterial activity against numerous Gram-positive bacteria. It selectively inhibits peptidoglycan biosynthesis through complex formation with the cell wall precursor lipid II (1:1 molar ratio) thus inhibiting cell wall synthesis. Shows antibacterial activity against the Gram-positive bacteria M.luteus, E.fecalis (MIC=32 mg/L), S.aureus (MIC=16 mg/L), S.carnosus (MIC=2 mg/L), S.pneumoniae (MIC=2 mg/L) and S.pyogenes (MIC=2 mg/L) and against a number of methicillin-resistant S.aureus and glycopeptide-intermediate S.aureus isolates. Does not show antibacterial activity against Gram-negative bacteria or antifungal activity against C.utilis. Shows slight antifungal activity against C.albicans. The polypeptide is Defensin Lucifensin (Lucilia sericata (Green bottle fly)).